The following is a 316-amino-acid chain: Transaldolase A (316 aa).

Lys131 serves as the catalytic Schiff-base intermediate with substrate.

This sequence belongs to the transaldolase family. Type 1 subfamily. Homodimer.

The protein resides in the cytoplasm. The catalysed reaction is D-sedoheptulose 7-phosphate + D-glyceraldehyde 3-phosphate = D-erythrose 4-phosphate + beta-D-fructose 6-phosphate. The protein operates within carbohydrate degradation; pentose phosphate pathway; D-glyceraldehyde 3-phosphate and beta-D-fructose 6-phosphate from D-ribose 5-phosphate and D-xylulose 5-phosphate (non-oxidative stage): step 2/3. In terms of biological role, transaldolase is important for the balance of metabolites in the pentose-phosphate pathway. This chain is Transaldolase A, found in Salmonella typhimurium (strain LT2 / SGSC1412 / ATCC 700720).